The following is a 244-amino-acid chain: Gamma-gliadin (244 aa).

Residues 18 to 64 (QQPFLQQPQQPSPQPQQVVQIISPATPTTIPSAGKPTSAPFPQQQQQ) are disordered. The segment covering 35–48 (VVQIISPATPTTIP) has biased composition (polar residues).

This sequence belongs to the gliadin/glutenin family.

Functionally, gliadin is the major seed storage protein in wheat. This Triticum aestivum (Wheat) protein is Gamma-gliadin.